A 149-amino-acid chain; its full sequence is Protein AE7-like 2 (149 aa).

The protein belongs to the MIP18 family.

In terms of biological role, may play a role in chromosome segregation through establishment of sister chromatid cohesion. Unable to complement ae7 mutants, and thus probably not involved in the cytosolic iron-sulfur assembly (CIA) pathway. The polypeptide is Protein AE7-like 2 (Arabidopsis thaliana (Mouse-ear cress)).